Consider the following 634-residue polypeptide: 1-deoxy-D-xylulose-5-phosphate synthase (634 aa).

Thiamine diphosphate is bound by residues H74 and 115–117; that span reads AHS. D146 is a binding site for Mg(2+). Thiamine diphosphate is bound by residues 147–148, N176, Y283, and E365; that span reads GA. Residue N176 coordinates Mg(2+).

This sequence belongs to the transketolase family. DXPS subfamily. In terms of assembly, homodimer. It depends on Mg(2+) as a cofactor. The cofactor is thiamine diphosphate.

The catalysed reaction is D-glyceraldehyde 3-phosphate + pyruvate + H(+) = 1-deoxy-D-xylulose 5-phosphate + CO2. It functions in the pathway metabolic intermediate biosynthesis; 1-deoxy-D-xylulose 5-phosphate biosynthesis; 1-deoxy-D-xylulose 5-phosphate from D-glyceraldehyde 3-phosphate and pyruvate: step 1/1. Functionally, catalyzes the acyloin condensation reaction between C atoms 2 and 3 of pyruvate and glyceraldehyde 3-phosphate to yield 1-deoxy-D-xylulose-5-phosphate (DXP). The protein is 1-deoxy-D-xylulose-5-phosphate synthase of Burkholderia lata (strain ATCC 17760 / DSM 23089 / LMG 22485 / NCIMB 9086 / R18194 / 383).